The following is a 275-amino-acid chain: tRNA pseudouridine synthase A (275 aa).

Catalysis depends on Asp62, which acts as the Nucleophile. Residue Tyr124 participates in substrate binding.

It belongs to the tRNA pseudouridine synthase TruA family. Homodimer.

It carries out the reaction uridine(38/39/40) in tRNA = pseudouridine(38/39/40) in tRNA. In terms of biological role, formation of pseudouridine at positions 38, 39 and 40 in the anticodon stem and loop of transfer RNAs. The chain is tRNA pseudouridine synthase A from Herminiimonas arsenicoxydans.